Consider the following 180-residue polypeptide: Large ribosomal subunit protein uL5 (180 aa).

Belongs to the universal ribosomal protein uL5 family. As to quaternary structure, part of the 50S ribosomal subunit; part of the 5S rRNA/L5/L18/L25 subcomplex. Contacts the 5S rRNA and the P site tRNA. Forms a bridge to the 30S subunit in the 70S ribosome.

Its function is as follows. This is one of the proteins that bind and probably mediate the attachment of the 5S RNA into the large ribosomal subunit, where it forms part of the central protuberance. In the 70S ribosome it contacts protein S13 of the 30S subunit (bridge B1b), connecting the 2 subunits; this bridge is implicated in subunit movement. Contacts the P site tRNA; the 5S rRNA and some of its associated proteins might help stabilize positioning of ribosome-bound tRNAs. This chain is Large ribosomal subunit protein uL5, found in Chlamydia pneumoniae (Chlamydophila pneumoniae).